We begin with the raw amino-acid sequence, 371 residues long: uncharacterized protein (371 aa).

This sequence belongs to the serpin family.

This is an uncharacterized protein from Pyrobaculum aerophilum (strain ATCC 51768 / DSM 7523 / JCM 9630 / CIP 104966 / NBRC 100827 / IM2).